We begin with the raw amino-acid sequence, 345 residues long: MSTPTPLSYKDAGVDIDAGNALVQNIKSAVKRTRRPEVMGNLGGFGALCELPTKYKHPVLVSGTDGVGTKLRLAIDFKSHDTVGIDLVAMCVNDLIVQGAEPLFFLDYYATGKLDVETATSVVNGIGEGCFQSGCALIGGETAEMPGMYEGEDYDLAGFCVGVVEKADIIDGTKVKAGDALIALASSGPHSNGYSLIRKVLEVSKADPQMDLNGKPLIKHLLEPTKIYVKSLLKLIAESDVHAMAHITGGGFWENIPRVLPDNCKAVVQGDSWQWPVVFDWLQTAGNIETYEMYRTFNCGVGMIVALPADKVDAALELLKAEGENAWHIGHIAARNGDEEQVEIL.

The protein belongs to the AIR synthase family.

The protein resides in the cytoplasm. It carries out the reaction 2-formamido-N(1)-(5-O-phospho-beta-D-ribosyl)acetamidine + ATP = 5-amino-1-(5-phospho-beta-D-ribosyl)imidazole + ADP + phosphate + H(+). The protein operates within purine metabolism; IMP biosynthesis via de novo pathway; 5-amino-1-(5-phospho-D-ribosyl)imidazole from N(2)-formyl-N(1)-(5-phospho-D-ribosyl)glycinamide: step 2/2. The protein is Phosphoribosylformylglycinamidine cyclo-ligase of Shewanella amazonensis (strain ATCC BAA-1098 / SB2B).